The chain runs to 139 residues: Large ribosomal subunit protein uL14A (139 aa).

This sequence belongs to the universal ribosomal protein uL14 family. In terms of assembly, component of the large ribosomal subunit (LSU). Mature yeast ribosomes consist of a small (40S) and a large (60S) subunit. The 40S small subunit contains 1 molecule of ribosomal RNA (18S rRNA) and at least 33 different proteins. The large 60S subunit contains 3 rRNA molecules (25S, 5.8S and 5S rRNA) and at least 46 different proteins.

It localises to the cytoplasm. Its subcellular location is the nucleus. In terms of biological role, component of the ribosome, a large ribonucleoprotein complex responsible for the synthesis of proteins in the cell. The small ribosomal subunit (SSU) binds messenger RNAs (mRNAs) and translates the encoded message by selecting cognate aminoacyl-transfer RNA (tRNA) molecules. The large subunit (LSU) contains the ribosomal catalytic site termed the peptidyl transferase center (PTC), which catalyzes the formation of peptide bonds, thereby polymerizing the amino acids delivered by tRNAs into a polypeptide chain. The nascent polypeptides leave the ribosome through a tunnel in the LSU and interact with protein factors that function in enzymatic processing, targeting, and the membrane insertion of nascent chains at the exit of the ribosomal tunnel. This Schizosaccharomyces pombe (strain 972 / ATCC 24843) (Fission yeast) protein is Large ribosomal subunit protein uL14A (rpl2301).